Consider the following 182-residue polypeptide: Nudix hydrolase 17, mitochondrial (182 aa).

A mitochondrion-targeting transit peptide spans 1-26 (MGVEKMVCLASRTGRQFQRYNKGRRQ). Residues 27–158 (VVGCVPYRFK…WMKEALDVLV (132 aa)) enclose the Nudix hydrolase domain. A Nudix box motif is present at residues 65-86 (GGWELDESVEEAASRECLEEAG). Glutamate 80 and glutamate 84 together coordinate Mg(2+).

It belongs to the Nudix hydrolase family. It depends on Mg(2+) as a cofactor. The cofactor is Mn(2+). Expressed in roots, leaves, stems and inflorescences.

It localises to the mitochondrion. In terms of biological role, probably mediates the hydrolysis of some nucleoside diphosphate derivatives. The sequence is that of Nudix hydrolase 17, mitochondrial (NUDT17) from Arabidopsis thaliana (Mouse-ear cress).